Reading from the N-terminus, the 238-residue chain is Probable RNA/DNA demethylase ALKBH6 (238 aa).

Residues 96–227 form the Fe2OG dioxygenase domain; the sequence is PANHVLVNQY…RVSLTIRRVP (132 aa). 2 residues coordinate 2-oxoglutarate: Asn103 and Tyr105. His114 and Asp116 together coordinate Fe cation. The tract at residues 138–161 is disordered; it reads YEPRRPEDDDPTEQPRPPPRPTTS. Residue His182 participates in Fe cation binding. The 2-oxoglutarate site is built by Arg218 and Ser220.

It belongs to the alkB family. In terms of assembly, interacts with VCPKMT. Fe(2+) is required as a cofactor. As to expression, widely expressed, with highest expression in testis and pancreas.

It localises to the cytoplasm. The protein resides in the nucleus. Functionally, probable Fe(2+)/2-oxoglutarate-dependent dioxygenase involved in oxidative demethylation of nucleic acids. Binds nucleic acids with a preference for ssDNA or ssRNA to other types of DNAs. May play a role in nucleic acid damage repair. This chain is Probable RNA/DNA demethylase ALKBH6, found in Homo sapiens (Human).